The chain runs to 421 residues: UPF0415 protein C7orf25 (421 aa).

It belongs to the UPF0415 family.

The chain is UPF0415 protein C7orf25 (C7orf25) from Homo sapiens (Human).